The following is a 319-amino-acid chain: Taste receptor type 2 member 39 (319 aa).

Topologically, residues 1-16 (MAQPSNYWKQDVLPLS) are extracellular. A helical transmembrane segment spans residues 17–37 (ILMLTLVATECTIGIIASGIV). Over 38–65 (MAVNAVSWVQKKAISITTRILLLLSVSR) the chain is Cytoplasmic. The helical transmembrane segment at 66-86 (IGLQSIMLIEITSSIFNVAFY) threads the bilayer. The Extracellular portion of the chain corresponds to 87–97 (NSVLYRVSNVS). An N-linked (GlcNAc...) asparagine glycan is attached at Asn-95. The helical transmembrane segment at 98-118 (FVFLNYCSLWFAALLSFFHFV) threads the bilayer. Residues 119-137 (KIANFSYPLFFKLKWRISE) are Cytoplasmic-facing. A helical transmembrane segment spans residues 138 to 158 (LMPWLLWLSVFISFSSSMFFS). Topologically, residues 159 to 194 (KHKFTVNNNNSLSNNICNFTMKLYVVETNVVNVSFL) are extracellular. 3 N-linked (GlcNAc...) asparagine glycosylation sites follow: Asn-167, Asn-176, and Asn-190. Residues 195 to 215 (FISGILPPLTMFVATATLLIF) form a helical membrane-spanning segment. The Cytoplasmic segment spans residues 216–247 (SLRRHTLNMRNSATGSRNPCIEAHMQAIKETS). A helical transmembrane segment spans residues 248–268 (CFLFLYILNAAALLLSTSNIV). Topologically, residues 269–273 (DASLF) are extracellular. Residues 274-294 (WSIVIRIVLPVYPAGHSVLLI) form a helical membrane-spanning segment. Topologically, residues 295 to 319 (QNNPGLRRTWKHLQSQIHLYLQNRF) are cytoplasmic.

This sequence belongs to the G-protein coupled receptor T2R family.

The protein resides in the membrane. Functionally, putative taste receptor which may play a role in the perception of bitterness. This Mus musculus (Mouse) protein is Taste receptor type 2 member 39 (Tas2r39).